Consider the following 261-residue polypeptide: MLARHGPRYGGSVNGHSDDSSGDAKQAAPTLYIFPHAGGTAKDYVAFSREFSADVKRIAVQYPGQHDRSGLPPLESIPTLADEIFAMMKPSARIDDPVAFFGHSMGGMLAFEVALRYQSAGHRVLAFFVSACSAPGHIRYKQLQDLSDREMLDLFTRMTGMNPDFFTDDEFFVGALPTLRAVRAIAGYSCPPETKLSCPIYAFIGDKDWIATQDDMDPWRDRTTEEFSIRVFPGDHFYLNDNLPELVSDIEDKTLQWHDRA.

The interval 1–24 is disordered; that stretch reads MLARHGPRYGGSVNGHSDDSSGDA. Residues S104, D208, and H236 contribute to the active site.

This sequence belongs to the thioesterase family.

It catalyses the reaction a fatty acyl-CoA + H2O = a fatty acid + CoA + H(+). Its function is as follows. Involved in the synthesis of both phthiocerol dimycocerosates (PDIMs) and phenolic glycolipids (PGLs), which are structurally related lipids non-covalently bound to the outer cell wall layer of M.tuberculosis and are important virulence factors. This chain is Thioesterase TesA (tesA), found in Mycobacterium bovis (strain ATCC BAA-935 / AF2122/97).